A 594-amino-acid polypeptide reads, in one-letter code: ATP-dependent RNA helicase DBP9 (594 aa).

Residues 15-43 (SSFDSFHLDSRLSQAIRSIGFKHPTLIQS) carry the Q motif motif. Residues 47 to 229 (PLALQEKRDI…QQFCRSPAIL (183 aa)) enclose the Helicase ATP-binding domain. 60 to 67 (ASTGSGKT) contributes to the ATP binding site. A DEAD box motif is present at residues 175 to 178 (DEVD). The region spanning 242–474 (KLIQYYVKVG…PYNFDIKQVE (233 aa)) is the Helicase C-terminal domain. The tract at residues 562–594 (PFHKNSHRKNGRVVKKKGNVQRKGKSDPLKSFK) is disordered. Positions 565–584 (KNSHRKNGRVVKKKGNVQRK) are enriched in basic residues. The span at 585-594 (GKSDPLKSFK) shows a compositional bias: basic and acidic residues.

The protein belongs to the DEAD box helicase family. DDX56/DBP9 subfamily.

It is found in the nucleus. The protein localises to the nucleolus. The enzyme catalyses ATP + H2O = ADP + phosphate + H(+). Functionally, ATP-binding RNA helicase involved in the biogenesis of 60S ribosomal subunits and is required for the normal formation of 25S and 5.8S rRNAs. This chain is ATP-dependent RNA helicase DBP9 (DBP9), found in Kluyveromyces lactis (strain ATCC 8585 / CBS 2359 / DSM 70799 / NBRC 1267 / NRRL Y-1140 / WM37) (Yeast).